Reading from the N-terminus, the 1663-residue chain is Cortactin-binding protein 2 (1663 aa).

5 disordered regions span residues 1-26 (MATD…TAEA), 203-225 (KKKT…DMEA), 359-440 (QASH…LHPG), 454-478 (GNAN…SPTS), and 497-615 (SRFT…PPKP). Residues 119–276 (RKMQERMSTQ…EQLKRGSDSK (158 aa)) adopt a coiled-coil conformation. Polar residues-rich tracts occupy residues 385-396 (GPSTDSAPDLTN) and 418-435 (QSHS…SANA). Residue R498 is modified to Asymmetric dimethylarginine. Over residues 606–615 (PTTPQLPPKP) the composition is skewed to pro residues. 6 ANK repeats span residues 709 to 739 (GRPT…DINY), 743 to 772 (DGHS…QVDA), 776 to 805 (NGFT…DINH), 809 to 838 (GGQT…DRSV), 842 to 871 (DGWT…PARG), and 912 to 942 (EGWT…EPDR). The segment at 1449-1490 (KGENGTWRKVSTSPRKKSGHFSSPTWNKPDLNEEGIRNTTTS) is disordered. At S1524 the chain carries Phosphoserine. Residues 1579-1663 (VSEKEVSPLS…KNEQVEKPNK (85 aa)) form a disordered region. Residues 1586–1595 (PLSSHQTTEC) show a composition bias toward polar residues. The segment covering 1624–1638 (SQNTKRSSSSSNTRQ) has biased composition (low complexity). A compositionally biased stretch (basic and acidic residues) spans 1645 to 1663 (SKEEIWNLHKNEQVEKPNK).

As to quaternary structure, interacts with CTTN/cortactin SH3 domain. Interacts with STRN, STRN4/zinedin and MOB4/phocein; this interactions mediate the association with the STRIPAK core complex and may regulate dendritic spine distribution of the STRIPAK complex in hippocampal neurons. Activation of glutamate receptors weakens the interaction with STRN and STRN4.

The protein localises to the cytoplasm. It is found in the cell cortex. It localises to the cell projection. The protein resides in the dendritic spine. Its function is as follows. Regulates the dendritic spine distribution of CTTN/cortactin in hippocampal neurons, and thus controls dendritic spinogenesis and dendritic spine maintenance. Associates with the striatin-interacting phosphatase and kinase (STRIPAK) core complex to regulate dendritic spine distribution of the STRIPAK complex in hippocampal neurons. The chain is Cortactin-binding protein 2 (CTTNBP2) from Rhinolophus ferrumequinum (Greater horseshoe bat).